The following is a 132-amino-acid chain: Agouti-signaling protein (132 aa).

An N-terminal signal peptide occupies residues 1–22 (MDVTRLLLATLLVFLCFFTANS). N-linked (GlcNAc...) asparagine glycosylation occurs at Asn39. A disordered region spans residues 62–85 (IGRKAAEKKRSSKKEASMKKVVRP). Over residues 65 to 79 (KAAEKKRSSKKEASM) the composition is skewed to basic and acidic residues. Disulfide bonds link Cys93–Cys108, Cys100–Cys114, Cys107–Cys125, Cys111–Cys132, and Cys116–Cys123. An Agouti domain is found at 93-132 (CVATRNSCKPPAPACCDPCASCQCRFFRSACSCRVLSLNC).

As to expression, widely expressed at low levels. Highly expressed in the skin. Expressed in adipose tissue.

It localises to the secreted. In terms of biological role, involved in the regulation of melanogenesis. The binding of ASP to MC1R precludes alpha-MSH initiated signaling and thus blocks production of cAMP, leading to a down-regulation of eumelanogenesis (brown/black pigment) and thus increasing synthesis of pheomelanin (yellow/red pigment). In higher primates, agouti may affect the quality of hair pigmentation rather than its pattern of deposition. Could well play a role in neuroendocrine aspects of melanocortin action. May have some functional role in regulating the lipid metabolism with adipocytes. The sequence is that of Agouti-signaling protein (ASIP) from Homo sapiens (Human).